The following is a 149-amino-acid chain: Protein-export protein SecB 2 (149 aa).

It belongs to the SecB family. In terms of assembly, homotetramer, a dimer of dimers. One homotetramer interacts with 1 SecA dimer.

It is found in the cytoplasm. Its function is as follows. One of the proteins required for the normal export of preproteins out of the cell cytoplasm. It is a molecular chaperone that binds to a subset of precursor proteins, maintaining them in a translocation-competent state. It also specifically binds to its receptor SecA. The protein is Protein-export protein SecB 2 of Francisella tularensis subsp. tularensis (strain FSC 198).